A 262-amino-acid polypeptide reads, in one-letter code: Shikimate dehydrogenase (NADP(+)) (262 aa).

Shikimate is bound by residues 15 to 17 (SRS) and Thr-62. Residue Lys-66 is the Proton acceptor of the active site. Residue Glu-78 coordinates NADP(+). 2 residues coordinate shikimate: Asn-87 and Asp-102. Residues 126-130 (GAGGA), 150-155 (NRTLAR), and Met-214 each bind NADP(+). Residue Tyr-216 coordinates shikimate. Gly-236 serves as a coordination point for NADP(+).

It belongs to the shikimate dehydrogenase family. As to quaternary structure, homodimer.

The enzyme catalyses shikimate + NADP(+) = 3-dehydroshikimate + NADPH + H(+). It participates in metabolic intermediate biosynthesis; chorismate biosynthesis; chorismate from D-erythrose 4-phosphate and phosphoenolpyruvate: step 4/7. Involved in the biosynthesis of the chorismate, which leads to the biosynthesis of aromatic amino acids. Catalyzes the reversible NADPH linked reduction of 3-dehydroshikimate (DHSA) to yield shikimate (SA). This chain is Shikimate dehydrogenase (NADP(+)), found in Acinetobacter baumannii (strain AB0057).